The following is a 614-amino-acid chain: Autophagy-related protein 22-1 (614 aa).

The segment at 1-29 (MQNCTNSPEDQAASVCPPPPQFPGDDTRP) is disordered. An N-linked (GlcNAc...) asparagine glycan is attached at asparagine 3. A run of 4 helical transmembrane segments spans residues 41 to 61 (YGWAAEVFTVCAMGSFLPITL), 126 to 146 (TASFAMYTFSLSVFIQAILII), 160 to 180 (MLLVIFALIGSVSTMLFLAVV), and 185 to 205 (LLGGLFAIISNTCFGASFVLL). Residues 229 to 254 (PTGTSHDSTSTADGPGQTDGTETTSL) are disordered. Residues 230–254 (TGTSHDSTSTADGPGQTDGTETTSL) show a composition bias toward polar residues. Transmembrane regions (helical) follow at residues 291–311 (GIGIGYIGAVILQAICILVVV), 322–342 (LVLFLIGLWWFTFTIPAAMWL), 383–403 (ILLFLAAWFLLSDGIATVSGT), 417–437 (AALGLINVIAMIAGVFGAFSW), 452–472 (IVACIILFELVPLYGLLGFIP), 486–506 (WEMYPLGVIYGLVMGGLSSYC), 523–545 (YALYAITDKGSSVFGPAIVGIIT), and 554–574 (AFVFLAVLILLPLPLMLLVDV).

This sequence belongs to the ATG22 family.

The protein resides in the vacuole membrane. Its function is as follows. Vacuolar effluxer which mediate the efflux of amino acids resulting from autophagic degradation. The release of autophagic amino acids allows the maintenance of protein synthesis and viability during nitrogen starvation. This Aspergillus niger (strain ATCC MYA-4892 / CBS 513.88 / FGSC A1513) protein is Autophagy-related protein 22-1 (atg22-1).